We begin with the raw amino-acid sequence, 252 residues long: 1-(5-phosphoribosyl)-5-[(5-phosphoribosylamino)methylideneamino] imidazole-4-carboxamide isomerase (252 aa).

Asp-10 functions as the Proton acceptor in the catalytic mechanism. The active-site Proton donor is the Asp-129.

Belongs to the HisA/HisF family.

It localises to the cytoplasm. The enzyme catalyses 1-(5-phospho-beta-D-ribosyl)-5-[(5-phospho-beta-D-ribosylamino)methylideneamino]imidazole-4-carboxamide = 5-[(5-phospho-1-deoxy-D-ribulos-1-ylimino)methylamino]-1-(5-phospho-beta-D-ribosyl)imidazole-4-carboxamide. The protein operates within amino-acid biosynthesis; L-histidine biosynthesis; L-histidine from 5-phospho-alpha-D-ribose 1-diphosphate: step 4/9. This is 1-(5-phosphoribosyl)-5-[(5-phosphoribosylamino)methylideneamino] imidazole-4-carboxamide isomerase from Frankia casuarinae (strain DSM 45818 / CECT 9043 / HFP020203 / CcI3).